Here is a 352-residue protein sequence, read N- to C-terminus: Histidinol-phosphate aminotransferase (352 aa).

Residue Lys-221 is modified to N6-(pyridoxal phosphate)lysine.

The protein belongs to the class-II pyridoxal-phosphate-dependent aminotransferase family. Histidinol-phosphate aminotransferase subfamily. In terms of assembly, homodimer. Pyridoxal 5'-phosphate is required as a cofactor.

The catalysed reaction is L-histidinol phosphate + 2-oxoglutarate = 3-(imidazol-4-yl)-2-oxopropyl phosphate + L-glutamate. It participates in amino-acid biosynthesis; L-histidine biosynthesis; L-histidine from 5-phospho-alpha-D-ribose 1-diphosphate: step 7/9. The protein is Histidinol-phosphate aminotransferase of Staphylococcus aureus (strain Mu3 / ATCC 700698).